The primary structure comprises 698 residues: Transferrin-binding protein B (698 aa).

Positions 1–20 are cleaved as a signal peptide; sequence MNNPLVNQAAMVLPVFLLSA. Cys-21 is lipidated: N-palmitoyl cysteine. Cys-21 is lipidated: S-diacylglycerol cysteine. 6 disordered regions span residues 33-58, 83-102, 294-324, 349-383, 428-479, and 669-698; these read VDTE…QKDQ, IKLS…KNPS, FSGK…SLSG, GSAK…SENS, ESGK…GDAN, and TKNA…KPVQ. The segment covering 46-56 has biased composition (polar residues); it reads DVSSEKPQAQK. A compositionally biased stretch (basic and acidic residues) spans 299-315; sequence EATDKPKNDGETKEHPF. Residues 369–383 show a composition bias toward low complexity; that stretch reads AAASNGAAGTSSENS. The segment covering 460–476 has biased composition (polar residues); that stretch reads QAGTAENGNPAASNTAG. Residues 671-686 show a composition bias toward low complexity; it reads NATDASGNGNSASSAT.

This sequence belongs to the TbpB family. In terms of assembly, binds only human holo-transferrin (TF), via the TF C-terminus. Forms a large complex with TbpA and TF. Interacts via its C-terminal domain with Slam1.

The protein resides in the cell outer membrane. It is found in the cell surface. Its function is as follows. Neisseria acquires iron by extracting it from serum transferrin (TF) in its human host. Acts as a TF receptor and is required for TF utilization. Involved in the initial capture of TF. Helps select only those TF molecules that can be used as an iron source and concentrates them on the cell surface, maintaining the iron-loaded status of the TF C-terminal lobe until its delivery to TbpA. This Neisseria meningitidis serogroup A / serotype 4A (strain DSM 15465 / Z2491) protein is Transferrin-binding protein B.